Here is a 374-residue protein sequence, read N- to C-terminus: Type II methyltransferase M.NgoFVII (374 aa).

The SAM-dependent MTase C5-type domain occupies 16–344 (PKILSLFSGC…KSILPIFSDN (329 aa)). Residue cysteine 88 is part of the active site.

Belongs to the class I-like SAM-binding methyltransferase superfamily. C5-methyltransferase family.

The catalysed reaction is a 2'-deoxycytidine in DNA + S-adenosyl-L-methionine = a 5-methyl-2'-deoxycytidine in DNA + S-adenosyl-L-homocysteine + H(+). A methylase, recognizes the double-stranded sequence 5'-GCSGC-3', methylates C-5 on both strands, and protects the DNA from cleavage by the NgoFVII endonuclease. In Neisseria gonorrhoeae, this protein is Type II methyltransferase M.NgoFVII (ngoFVIIM).